A 131-amino-acid chain; its full sequence is Profilin-4 (131 aa).

Residues Cys13 and Cys115 are joined by a disulfide bond. An Involved in PIP2 interaction motif is present at residues 81 to 97; it reads AVIRGKKGAGGITVKKT. Thr111 is subject to Phosphothreonine.

Belongs to the profilin family. In terms of assembly, occurs in many kinds of cells as a complex with monomeric actin in a 1:1 ratio. In terms of processing, phosphorylated by MAP kinases.

It is found in the cytoplasm. The protein localises to the cytoskeleton. Its function is as follows. Binds to actin and affects the structure of the cytoskeleton. At high concentrations, profilin prevents the polymerization of actin, whereas it enhances it at low concentrations. The chain is Profilin-4 from Olea europaea (Common olive).